The sequence spans 768 residues: Mitochondrial 15S rRNA processing factor CCM1 (768 aa).

Residues 1-90 constitute a mitochondrion transit peptide; that stretch reads MIRLIRWNNV…RSFTKVIAQH (90 aa). 2 disordered regions span residues 28 to 65 and 90 to 114; these read NKRK…NTGS and HLKP…LPPI. Over residues 43-53 the composition is skewed to basic and acidic residues; sequence NRKDGDIEPYR. Residues 55–65 show a composition bias toward polar residues; sequence TDQNQTPNTGS. 5 PPR repeats span residues 274–308, 309–344, 347–381, 382–417, and 418–452; these read KIDH…NIEI, SKMI…SQKT, DEKV…GMNV, NQNL…GWVP, and NLQT…NSVT. The span at 583–596 shows a compositional bias: basic and acidic residues; that stretch reads IEPRQDEPTEKATT. The disordered stretch occupies residues 583-609; that stretch reads IEPRQDEPTEKATTTEEQNASSETDNN. Over residues 597 to 609 the composition is skewed to polar residues; the sequence is TEEQNASSETDNN. One copy of the PPR 6 repeat lies at 634-664; sequence DSYLYNLAIKAAGKFKNYGFAQEILHERGQF.

It belongs to the CCM1 family. As to quaternary structure, binds to mitochondrial small subunit 15S rRNA.

Its subcellular location is the mitochondrion. Functionally, regulates mitochondrial small subunit maturation by controlling 15S rRNA 5'-end processing. Localizes to the 5' precursor of the 15S rRNA in a position that is subsequently occupied by mS47 in the mature yeast mtSSU. Uses structure and sequence-specific RNA recognition, binding to a single-stranded region of the precursor and specifically recognizing bases -6 to -1. The exchange of Ccm1 for mS47 is coupled to the irreversible removal of precursor rRNA that is accompanied by conformational changes of the mitoribosomal proteins uS5m and mS26. These conformational changes signal completion of 5'-end rRNA processing through protection of the mature 5'-end of the 15S rRNA and stabilization of mS47. The removal of the 5' precursor together with the dissociation of Ccm1 may be catalyzed by the 5'-3' exoribonuclease Pet127. Involved in the specific removal of group I introns in mitochondrial encoded transcripts. This Candida albicans (strain SC5314 / ATCC MYA-2876) (Yeast) protein is Mitochondrial 15S rRNA processing factor CCM1 (CCM1).